We begin with the raw amino-acid sequence, 523 residues long: GMP synthase [glutamine-hydrolyzing] (523 aa).

The region spanning 8–205 (KILILDFGSQ…VVNICGCATN (198 aa)) is the Glutamine amidotransferase type-1 domain. Cys85 acts as the Nucleophile in catalysis. Residues His179 and Glu181 contribute to the active site. One can recognise a GMPS ATP-PPase domain in the interval 206–398 (WTPENIIEDA…LGLPAEMLNR (193 aa)). Residue 233-239 (SGGVDSS) coordinates ATP.

As to quaternary structure, homodimer.

It catalyses the reaction XMP + L-glutamine + ATP + H2O = GMP + L-glutamate + AMP + diphosphate + 2 H(+). It participates in purine metabolism; GMP biosynthesis; GMP from XMP (L-Gln route): step 1/1. In terms of biological role, catalyzes the synthesis of GMP from XMP. The sequence is that of GMP synthase [glutamine-hydrolyzing] from Actinobacillus succinogenes (strain ATCC 55618 / DSM 22257 / CCUG 43843 / 130Z).